The sequence spans 117 residues: Large ribosomal subunit protein bL20 (117 aa).

The protein belongs to the bacterial ribosomal protein bL20 family.

In terms of biological role, binds directly to 23S ribosomal RNA and is necessary for the in vitro assembly process of the 50S ribosomal subunit. It is not involved in the protein synthesizing functions of that subunit. The sequence is that of Large ribosomal subunit protein bL20 from Pelobacter propionicus (strain DSM 2379 / NBRC 103807 / OttBd1).